The primary structure comprises 137 residues: Protein E6 (137 aa).

Zinc fingers lie at residues 17–53 and 90–127; these read CVWC…CTTC and CCYC…CYDC.

The protein belongs to the papillomaviridae E6 protein family. In terms of assembly, forms homodimers. Interacts with ubiquitin-protein ligase UBE3A/E6-AP; this interaction stimulates UBE3A ubiquitin activity. Interacts with host BAK1.

Its subcellular location is the host cytoplasm. It localises to the host nucleus. Functionally, plays a major role in the induction and maintenance of cellular transformation. E6 associates with host UBE3A/E6-AP ubiquitin-protein ligase and modulates its activity. Protects host keratinocytes from apoptosis by mediating the degradation of host BAK1. May also inhibit host immune response. The chain is Protein E6 from Bos taurus (Bovine).